A 568-amino-acid polypeptide reads, in one-letter code: Phosphomethylpyrimidine synthase (568 aa).

Residues N188, M217, Y246, H282, 302–304 (SRG), 343–346 (DGLR), and E382 each bind substrate. H386 is a Zn(2+) binding site. Residue Y409 participates in substrate binding. Position 450 (H450) interacts with Zn(2+). C530, C533, and C538 together coordinate [4Fe-4S] cluster.

This sequence belongs to the ThiC family. In terms of assembly, homodimer. The cofactor is [4Fe-4S] cluster.

It carries out the reaction 5-amino-1-(5-phospho-beta-D-ribosyl)imidazole + S-adenosyl-L-methionine = 4-amino-2-methyl-5-(phosphooxymethyl)pyrimidine + CO + 5'-deoxyadenosine + formate + L-methionine + 3 H(+). It participates in cofactor biosynthesis; thiamine diphosphate biosynthesis. In terms of biological role, catalyzes the synthesis of the hydroxymethylpyrimidine phosphate (HMP-P) moiety of thiamine from aminoimidazole ribotide (AIR) in a radical S-adenosyl-L-methionine (SAM)-dependent reaction. This chain is Phosphomethylpyrimidine synthase, found in Idiomarina loihiensis (strain ATCC BAA-735 / DSM 15497 / L2-TR).